The sequence spans 543 residues: Chaperonin GroEL 1 (543 aa).

Residues 29–32 (TLGP), Lys50, 86–90 (DGTTT), Gly414, and Asp493 each bind ATP. Residues 524–543 (KEDKGAPAGMGGMPPGGGMY) are disordered. Gly residues predominate over residues 531–543 (AGMGGMPPGGGMY).

This sequence belongs to the chaperonin (HSP60) family. Forms a cylinder of 14 subunits composed of two heptameric rings stacked back-to-back. Interacts with the co-chaperonin GroES.

It is found in the cytoplasm. The enzyme catalyses ATP + H2O + a folded polypeptide = ADP + phosphate + an unfolded polypeptide.. Its function is as follows. Together with its co-chaperonin GroES, plays an essential role in assisting protein folding. The GroEL-GroES system forms a nano-cage that allows encapsulation of the non-native substrate proteins and provides a physical environment optimized to promote and accelerate protein folding. The polypeptide is Chaperonin GroEL 1 (Syntrophobacter fumaroxidans (strain DSM 10017 / MPOB)).